We begin with the raw amino-acid sequence, 300 residues long: uncharacterized protein (300 aa).

Solcar repeat units follow at residues 10–101, 119–199, and 212–294; these read ESQT…VKDF, GKAI…AKEY, and FQNF…LIPF. Helical transmembrane passes span 16–36, 70–86, 121–141, 178–198, 215–235, and 275–295; these read IVGS…VDTI, ATSL…YKIV, AIMH…LLPL, TAAR…FAKE, FFTS…LDVI, and LTTG…IPFF.

Belongs to the mitochondrial carrier (TC 2.A.29) family.

It localises to the mitochondrion inner membrane. This is an uncharacterized protein from Schizosaccharomyces pombe (strain 972 / ATCC 24843) (Fission yeast).